The following is a 340-amino-acid chain: Ketol-acid reductoisomerase (NADP(+)) (340 aa).

A KARI N-terminal Rossmann domain is found at 3-182 (VTMYYEDDVE…GCARVGIIET (180 aa)). Residues 26–29 (YGSQ), Arg49, Ser53, and 83–86 (DELQ) each bind NADP(+). His108 is a catalytic residue. Gly134 serves as a coordination point for NADP(+). Residues 183-328 (TFKEETEEDL…AELRKAMPFT (146 aa)) form the KARI C-terminal knotted domain. Mg(2+) contacts are provided by Asp191, Glu195, Glu227, and Glu231. Ser252 contributes to the substrate binding site.

This sequence belongs to the ketol-acid reductoisomerase family. Requires Mg(2+) as cofactor.

It carries out the reaction (2R)-2,3-dihydroxy-3-methylbutanoate + NADP(+) = (2S)-2-acetolactate + NADPH + H(+). The enzyme catalyses (2R,3R)-2,3-dihydroxy-3-methylpentanoate + NADP(+) = (S)-2-ethyl-2-hydroxy-3-oxobutanoate + NADPH + H(+). It functions in the pathway amino-acid biosynthesis; L-isoleucine biosynthesis; L-isoleucine from 2-oxobutanoate: step 2/4. The protein operates within amino-acid biosynthesis; L-valine biosynthesis; L-valine from pyruvate: step 2/4. Functionally, involved in the biosynthesis of branched-chain amino acids (BCAA). Catalyzes an alkyl-migration followed by a ketol-acid reduction of (S)-2-acetolactate (S2AL) to yield (R)-2,3-dihydroxy-isovalerate. In the isomerase reaction, S2AL is rearranged via a Mg-dependent methyl migration to produce 3-hydroxy-3-methyl-2-ketobutyrate (HMKB). In the reductase reaction, this 2-ketoacid undergoes a metal-dependent reduction by NADPH to yield (R)-2,3-dihydroxy-isovalerate. The polypeptide is Ketol-acid reductoisomerase (NADP(+)) (Lactococcus lactis subsp. lactis (strain IL1403) (Streptococcus lactis)).